The sequence spans 300 residues: Phospholipase A1 (300 aa).

C4 and C87 form a disulfide bridge. S137 serves as the catalytic Nucleophile. Residue D165 is the Charge relay system of the active site. Intrachain disulfides connect C176-C181 and C218-C227. Residue H229 is the Charge relay system of the active site. Intrachain disulfides connect C244–C268, C245–C293, and C261–C266.

Belongs to the AB hydrolase superfamily. Lipase family. Expressed by the venom gland.

It is found in the secreted. The catalysed reaction is a 1,2-diacyl-sn-glycero-3-phosphocholine + H2O = a 2-acyl-sn-glycero-3-phosphocholine + a fatty acid + H(+). Local inflammatory effects are inhibited by antiserotonin drugs (cyproheptadine and methysergide), indomethacin, betamethasone, and antihistamine (chlorpheniramine). Functionally, catalyzes the hydrolysis of phosphatidylcholine with phospholipase A1 activity. Shows potent hemolytic activity that is responsible for its lethal effect. May act as an allergen. In vivo, induces local inflammatory effects. The polypeptide is Phospholipase A1 (Vespa basalis (Hornet)).